A 188-amino-acid polypeptide reads, in one-letter code: Small ribosomal subunit protein uS7 (188 aa).

Belongs to the universal ribosomal protein uS7 family. In terms of assembly, part of the 30S ribosomal subunit.

In terms of biological role, one of the primary rRNA binding proteins, it binds directly to 16S rRNA where it nucleates assembly of the head domain of the 30S subunit. Is located at the subunit interface close to the decoding center. The chain is Small ribosomal subunit protein uS7 from Methanococcus maripaludis (strain C7 / ATCC BAA-1331).